Reading from the N-terminus, the 271-residue chain is Large ribosomal subunit protein uL15c (271 aa).

Disordered stretches follow at residues 1 to 21 (MASL…NNYP) and 66 to 120 (SNVS…QKSR). The N-terminal 61 residues, 1–61 (MASLLSLSST…KESTRLVVVA (61 aa)), are a transit peptide targeting the chloroplast. Over residues 66 to 76 (SNVSPSIGSGS) the composition is skewed to low complexity. The segment covering 91-101 (SRKKGKRKGRG) has biased composition (basic residues). Residues 102 to 114 (HAAGQGGSCGFGM) are compositionally biased toward gly residues.

As to quaternary structure, component of the chloroplast large ribosomal subunit (LSU). Mature 70S chloroplast ribosomes of higher plants consist of a small (30S) and a large (50S) subunit. The 30S small subunit contains 1 molecule of ribosomal RNA (16S rRNA) and 24 different proteins. The 50S large subunit contains 3 rRNA molecules (23S, 5S and 4.5S rRNA) and 33 different proteins.

The protein resides in the plastid. The protein localises to the chloroplast. In terms of biological role, component of the chloroplast ribosome (chloro-ribosome), a dedicated translation machinery responsible for the synthesis of chloroplast genome-encoded proteins, including proteins of the transcription and translation machinery and components of the photosynthetic apparatus. This is Large ribosomal subunit protein uL15c (RPL15) from Spinacia oleracea (Spinach).